A 436-amino-acid chain; its full sequence is tRNA pseudouridine synthase Pus10 (436 aa).

D254 functions as the Nucleophile in the catalytic mechanism. 2 residues coordinate substrate: Y322 and Y394.

The protein belongs to the pseudouridine synthase Pus10 family.

It carries out the reaction uridine(54) in tRNA = pseudouridine(54) in tRNA. The catalysed reaction is uridine(55) in tRNA = pseudouridine(55) in tRNA. Its function is as follows. Responsible for synthesis of pseudouridine from uracil-54 and uracil-55 in the psi GC loop of transfer RNAs. The chain is tRNA pseudouridine synthase Pus10 from Methanopyrus kandleri (strain AV19 / DSM 6324 / JCM 9639 / NBRC 100938).